We begin with the raw amino-acid sequence, 464 residues long: Divalent metal cation transporter MntH (464 aa).

Transmembrane regions (helical) follow at residues 57 to 77 (ILIA…AGGA), 82 to 102 (SLLS…SMAA), 125 to 145 (GIIL…AEII), 157 to 177 (IPLV…LLLM), 186 to 206 (AIVA…VFLA), 229 to 249 (MLYL…LYLG), 281 to 301 (LTIA…LFFG), 321 to 341 (IVGA…LLSS), 376 to 396 (LLSV…EAKI), 399 to 419 (LLTL…VPLV), and 443 to 463 (VATV…VGVI).

This sequence belongs to the NRAMP family.

It is found in the cell membrane. In terms of biological role, h(+)-stimulated, divalent metal cation uptake system. The polypeptide is Divalent metal cation transporter MntH (Levilactobacillus brevis (Lactobacillus brevis)).